A 264-amino-acid chain; its full sequence is Phosphatidylglycerol--prolipoprotein diacylglyceryl transferase (264 aa).

7 helical membrane-spanning segments follow: residues 14 to 34 (VGPL…LLFM), 57 to 77 (LLLY…VLFF), 89 to 109 (ILAI…VLVA), 127 to 147 (FIAP…FING), 176 to 196 (QLYQ…VYSA), 202 to 222 (KAVS…AEFF), and 235 to 255 (LGLS…VGLL). Position 140 (R140) interacts with a 1,2-diacyl-sn-glycero-3-phospho-(1'-sn-glycerol).

This sequence belongs to the Lgt family.

It is found in the cell inner membrane. The enzyme catalyses L-cysteinyl-[prolipoprotein] + a 1,2-diacyl-sn-glycero-3-phospho-(1'-sn-glycerol) = an S-1,2-diacyl-sn-glyceryl-L-cysteinyl-[prolipoprotein] + sn-glycerol 1-phosphate + H(+). The protein operates within protein modification; lipoprotein biosynthesis (diacylglyceryl transfer). In terms of biological role, catalyzes the transfer of the diacylglyceryl group from phosphatidylglycerol to the sulfhydryl group of the N-terminal cysteine of a prolipoprotein, the first step in the formation of mature lipoproteins. This Aromatoleum aromaticum (strain DSM 19018 / LMG 30748 / EbN1) (Azoarcus sp. (strain EbN1)) protein is Phosphatidylglycerol--prolipoprotein diacylglyceryl transferase.